The sequence spans 152 residues: Protein Smg homolog (152 aa).

The protein belongs to the Smg family.

This chain is Protein Smg homolog, found in Nitrosomonas europaea (strain ATCC 19718 / CIP 103999 / KCTC 2705 / NBRC 14298).